We begin with the raw amino-acid sequence, 600 residues long: UvrABC system protein C (600 aa).

Residues 15–100 enclose the GIY-YIG domain; sequence NSAGVYQYFN…IKQLHPKYNI (86 aa). One can recognise a UVR domain in the interval 203 to 238; sequence SVLLKNLEKQMLVLAQNENYEEAAKVRDQIAMIKDL.

It belongs to the UvrC family. As to quaternary structure, interacts with UvrB in an incision complex.

Its subcellular location is the cytoplasm. Its function is as follows. The UvrABC repair system catalyzes the recognition and processing of DNA lesions. UvrC both incises the 5' and 3' sides of the lesion. The N-terminal half is responsible for the 3' incision and the C-terminal half is responsible for the 5' incision. The sequence is that of UvrABC system protein C from Campylobacter jejuni (strain RM1221).